The following is a 544-amino-acid chain: Protein angel homolog 2 (544 aa).

It belongs to the CCR4/nocturin family.

The chain is Protein angel homolog 2 (ANGEL2) from Homo sapiens (Human).